We begin with the raw amino-acid sequence, 247 residues long: Adenosylcobinamide-GDP ribazoletransferase (247 aa).

A run of 5 helical transmembrane segments spans residues 34-54 (IITF…VFMV), 59-79 (CGVP…TGGF), 113-133 (GGLA…ELAL), 138-158 (ILAL…LLMY), and 194-214 (VLLP…AIFI).

The protein belongs to the CobS family. It depends on Mg(2+) as a cofactor.

The protein resides in the cell inner membrane. The catalysed reaction is alpha-ribazole + adenosylcob(III)inamide-GDP = adenosylcob(III)alamin + GMP + H(+). The enzyme catalyses alpha-ribazole 5'-phosphate + adenosylcob(III)inamide-GDP = adenosylcob(III)alamin 5'-phosphate + GMP + H(+). Its pathway is cofactor biosynthesis; adenosylcobalamin biosynthesis; adenosylcobalamin from cob(II)yrinate a,c-diamide: step 7/7. Its function is as follows. Joins adenosylcobinamide-GDP and alpha-ribazole to generate adenosylcobalamin (Ado-cobalamin). Also synthesizes adenosylcobalamin 5'-phosphate from adenosylcobinamide-GDP and alpha-ribazole 5'-phosphate. This Shigella boydii serotype 4 (strain Sb227) protein is Adenosylcobinamide-GDP ribazoletransferase.